Reading from the N-terminus, the 354-residue chain is Peptide chain release factor 1 (354 aa).

An N5-methylglutamine modification is found at Gln232.

This sequence belongs to the prokaryotic/mitochondrial release factor family. Post-translationally, methylated by PrmC. Methylation increases the termination efficiency of RF1.

It is found in the cytoplasm. Peptide chain release factor 1 directs the termination of translation in response to the peptide chain termination codons UAG and UAA. This chain is Peptide chain release factor 1, found in Phytoplasma australiense.